Consider the following 452-residue polypeptide: PTS system N-acetylglucosamine-specific EIICB component (452 aa).

The 361-residue stretch at 1 to 361 folds into the PTS EIIC type-1 domain; sequence MLSFLQKLGK…LNLKTPGRED (361 aa). Transmembrane regions (helical) follow at residues 8 to 28, 42 to 62, 91 to 111, 130 to 150, 163 to 183, 223 to 243, 257 to 277, 279 to 299, and 329 to 349; these read LGKSFMLPIAVLPAVGIILAL, AGTAVFDHLPLIFAIGIAIGI, TNNMAVFGGIIAGLIAGYTYN, LVPILTAIITIILAGIFGVVW, WMLGLGGIGAGIFGLFNRLLI, MTGFFPIMMFGLPAACLAMVV, MIGFALTAFITGITEPIEFAF, FLSPLLYAVHAVLTGLSLFIV, and LLLLVGICYAAVYFIVFYVLI. One can recognise a PTS EIIB type-1 domain in the interval 375-452; that stretch reads DVNENIMLKG…AAEELRAAVK (78 aa). C397 acts as the Phosphocysteine intermediate; for EIIB activity in catalysis.

Interacts with FloT.

Its subcellular location is the cell membrane. It localises to the membrane raft. The enzyme catalyses N(pros)-phospho-L-histidyl-[protein] + N-acetyl-D-glucosamine(out) = N-acetyl-D-glucosamine 6-phosphate(in) + L-histidyl-[protein]. In terms of biological role, the phosphoenolpyruvate-dependent sugar phosphotransferase system (sugar PTS), a major carbohydrate active -transport system, catalyzes the phosphorylation of incoming sugar substrates concomitantly with their translocation across the cell membrane. This system is involved in N-acetylglucosamine transport. This Bacillus subtilis (strain 168) protein is PTS system N-acetylglucosamine-specific EIICB component (nagP).